Consider the following 158-residue polypeptide: Non-secretory ribonuclease (158 aa).

The first 27 residues, 1 to 27, serve as a signal peptide directing secretion; it reads MVPKLFTSQICLLLLLGLLGVEGSLHA. Catalysis depends on H42, which acts as the Proton acceptor. Cystine bridges form between C50–C110, C64–C121, C82–C136, and C89–C98. Y60 carries the 3'-nitrotyrosine modification. 65 to 69 contacts substrate; sequence KNQNT. N-linked (GlcNAc...) asparagine glycosylation is found at N86, N92, and N111. Residue H153 is the Proton donor of the active site.

The protein belongs to the pancreatic ribonuclease family. Interacts with and forms a tight 1:1 complex with RNH1. Dimerization of two such complexes may occur.

It is found in the lysosome. It localises to the cytoplasmic granule. The catalysed reaction is an [RNA] containing cytidine + H2O = an [RNA]-3'-cytidine-3'-phosphate + a 5'-hydroxy-ribonucleotide-3'-[RNA].. It carries out the reaction an [RNA] containing uridine + H2O = an [RNA]-3'-uridine-3'-phosphate + a 5'-hydroxy-ribonucleotide-3'-[RNA].. In terms of biological role, this is a non-secretory ribonuclease. It is a pyrimidine specific nuclease with a slight preference for U. Cytotoxin and helminthotoxin. Possesses a wide variety of biological activities. The polypeptide is Non-secretory ribonuclease (RNASE2) (Aotus trivirgatus (Three-striped night monkey)).